Reading from the N-terminus, the 344-residue chain is Tetraacyldisaccharide 4'-kinase (344 aa).

68–75 provides a ligand contact to ATP; sequence TAGGNGKT.

It belongs to the LpxK family.

It carries out the reaction a lipid A disaccharide + ATP = a lipid IVA + ADP + H(+). It functions in the pathway glycolipid biosynthesis; lipid IV(A) biosynthesis; lipid IV(A) from (3R)-3-hydroxytetradecanoyl-[acyl-carrier-protein] and UDP-N-acetyl-alpha-D-glucosamine: step 6/6. Functionally, transfers the gamma-phosphate of ATP to the 4'-position of a tetraacyldisaccharide 1-phosphate intermediate (termed DS-1-P) to form tetraacyldisaccharide 1,4'-bis-phosphate (lipid IVA). The sequence is that of Tetraacyldisaccharide 4'-kinase from Photobacterium profundum (strain SS9).